The sequence spans 37 residues: Large ribosomal subunit protein bL36 (37 aa).

This sequence belongs to the bacterial ribosomal protein bL36 family.

The protein is Large ribosomal subunit protein bL36 of Staphylococcus epidermidis (strain ATCC 35984 / DSM 28319 / BCRC 17069 / CCUG 31568 / BM 3577 / RP62A).